A 179-amino-acid polypeptide reads, in one-letter code: Large ribosomal subunit protein uL6 (179 aa).

It belongs to the universal ribosomal protein uL6 family. Part of the 50S ribosomal subunit.

Its function is as follows. This protein binds to the 23S rRNA, and is important in its secondary structure. It is located near the subunit interface in the base of the L7/L12 stalk, and near the tRNA binding site of the peptidyltransferase center. The sequence is that of Large ribosomal subunit protein uL6 from Bifidobacterium adolescentis (strain ATCC 15703 / DSM 20083 / NCTC 11814 / E194a).